Here is a 231-residue protein sequence, read N- to C-terminus: Protein OPG061 (231 aa).

It belongs to the orthopoxvirus OPG058 family.

It is found in the host nucleus. Its subcellular location is the host nucleolus. The protein is Protein OPG061 (OPG061) of Variola virus.